The following is a 943-amino-acid chain: Zinc finger BED domain-containing protein 39 (943 aa).

The tract at residues 1-99 is disordered; that stretch reads MSSVSSDIDG…DIAMDVSGST (99 aa). Basic and acidic residues predominate over residues 12–21; the sequence is PETKRFRIDV. Positions 50 to 72 are enriched in low complexity; it reads SPAAPSSASYRSSNSSVISSSES. Residues 73 to 85 show a composition bias toward basic and acidic residues; it reads PIKDEDVDVHDGQ. The BED-type; degenerate zinc finger occupies 184–235; it reads NKQTPVWKYFVYNKTENLSRCIVGDCTYMLKGPHTSTLACHLKKHTREYSEF. 2 disordered regions span residues 242-315 and 328-348; these read YSRT…KEPS and RQAT…PQLP. Residues 262–276 are compositionally biased toward polar residues; the sequence is TLQTQNTPRQTGSPA. A compositionally biased stretch (low complexity) spans 277–292; it reads STCNTNSNTSSSVSSG. Residues 328-338 are compositionally biased toward polar residues; it reads RQATNNSNGSP.

In terms of tissue distribution, expressed in distal tip cells and in germline cells.

The protein resides in the nucleus. It is found in the cytoplasm. Functionally, regulates the timing and orientation of distal tip cell migration during gonadal development. May act in parallel to cacn-1 and Rac GTPases to control the anterior and posterior migration of distal tip cells. The protein is Zinc finger BED domain-containing protein 39 of Caenorhabditis elegans.